The primary structure comprises 184 residues: Glutathione-regulated potassium-efflux system ancillary protein KefG (184 aa).

The protein belongs to the NAD(P)H dehydrogenase (quinone) family. KefG subfamily. In terms of assembly, interacts with KefB.

The protein resides in the cell inner membrane. It catalyses the reaction a quinone + NADH + H(+) = a quinol + NAD(+). The catalysed reaction is a quinone + NADPH + H(+) = a quinol + NADP(+). Functionally, regulatory subunit of a potassium efflux system that confers protection against electrophiles. Required for full activity of KefB. This Cronobacter sakazakii (strain ATCC BAA-894) (Enterobacter sakazakii) protein is Glutathione-regulated potassium-efflux system ancillary protein KefG.